A 320-amino-acid chain; its full sequence is Polyprenal reductase 1 (320 aa).

A run of 6 helical transmembrane segments spans residues 5–25 (IVWL…LPLV), 64–84 (FFGH…AATW), 143–163 (MHIL…LSLC), 200–220 (PLMK…WGWI), 243–263 (IIPY…AEIV), and 266–286 (LGLL…FGFV).

This sequence belongs to the steroid 5-alpha reductase family. Polyprenal reductase subfamily. In terms of tissue distribution, expressed in roots and flowers.

It is found in the cell membrane. It carries out the reaction a di-trans,poly-cis-dolichal + NADP(+) = a di-trans,poly-cis-polyprenal + NADPH + H(+). It functions in the pathway protein modification; protein glycosylation. Plays a key role in early steps of protein N-linked glycosylation by being involved in the conversion of polyprenol into dolichol. Acts as a polyprenal reductase that mediates the reduction of polyprenal into dolichal in a NADP-dependent mechanism. Dolichols are required for the synthesis of dolichol-linked monosaccharides and the oligosaccharide precursor used for N-glycosylation. Involved in the regulation of plant growth and reproductive processes. In Arabidopsis thaliana (Mouse-ear cress), this protein is Polyprenal reductase 1.